Here is a 210-residue protein sequence, read N- to C-terminus: Guanylate kinase (210 aa).

The 179-residue stretch at 6–184 (GNIYIVVAPS…ARLDLISIVR (179 aa)) folds into the Guanylate kinase-like domain. 13–20 (APSGAGKT) contacts ATP.

This sequence belongs to the guanylate kinase family.

It localises to the cytoplasm. The enzyme catalyses GMP + ATP = GDP + ADP. Functionally, essential for recycling GMP and indirectly, cGMP. In Chromobacterium violaceum (strain ATCC 12472 / DSM 30191 / JCM 1249 / CCUG 213 / NBRC 12614 / NCIMB 9131 / NCTC 9757 / MK), this protein is Guanylate kinase.